The chain runs to 378 residues: Ribosomal RNA large subunit methyltransferase G (378 aa).

This sequence belongs to the methyltransferase superfamily. RlmG family.

Its subcellular location is the cytoplasm. It catalyses the reaction guanosine(1835) in 23S rRNA + S-adenosyl-L-methionine = N(2)-methylguanosine(1835) in 23S rRNA + S-adenosyl-L-homocysteine + H(+). In terms of biological role, specifically methylates the guanine in position 1835 (m2G1835) of 23S rRNA. In Enterobacter sp. (strain 638), this protein is Ribosomal RNA large subunit methyltransferase G.